Consider the following 454-residue polypeptide: Bifunctional protein GlmU (454 aa).

The pyrophosphorylase stretch occupies residues 1-226; sequence MSLEIVILAA…AMEVQGVNDR (226 aa). Residues 8–11, Lys-22, Gln-73, 78–79, 99–101, Gly-136, Glu-151, Asn-166, and Asn-224 each bind UDP-N-acetyl-alpha-D-glucosamine; these read LAAG, GT, and YGD. Residue Asp-101 coordinates Mg(2+). Asn-224 provides a ligand contact to Mg(2+). The interval 227-247 is linker; sequence MQQAQLERHYQRLRAEELMRQ. An N-acetyltransferase region spans residues 248-454; it reads GVTLLDPQRL…NWKRPEKIKK (207 aa). UDP-N-acetyl-alpha-D-glucosamine contacts are provided by Arg-330 and Lys-348. Catalysis depends on His-360, which acts as the Proton acceptor. Residues Tyr-363 and Asn-374 each coordinate UDP-N-acetyl-alpha-D-glucosamine. Acetyl-CoA contacts are provided by residues Ala-377, 383 to 384, Ser-402, Ala-420, and Arg-437; that span reads NY.

In the N-terminal section; belongs to the N-acetylglucosamine-1-phosphate uridyltransferase family. It in the C-terminal section; belongs to the transferase hexapeptide repeat family. In terms of assembly, homotrimer. Mg(2+) is required as a cofactor.

Its subcellular location is the cytoplasm. It carries out the reaction alpha-D-glucosamine 1-phosphate + acetyl-CoA = N-acetyl-alpha-D-glucosamine 1-phosphate + CoA + H(+). It catalyses the reaction N-acetyl-alpha-D-glucosamine 1-phosphate + UTP + H(+) = UDP-N-acetyl-alpha-D-glucosamine + diphosphate. It participates in nucleotide-sugar biosynthesis; UDP-N-acetyl-alpha-D-glucosamine biosynthesis; N-acetyl-alpha-D-glucosamine 1-phosphate from alpha-D-glucosamine 6-phosphate (route II): step 2/2. It functions in the pathway nucleotide-sugar biosynthesis; UDP-N-acetyl-alpha-D-glucosamine biosynthesis; UDP-N-acetyl-alpha-D-glucosamine from N-acetyl-alpha-D-glucosamine 1-phosphate: step 1/1. Its pathway is bacterial outer membrane biogenesis; LPS lipid A biosynthesis. Functionally, catalyzes the last two sequential reactions in the de novo biosynthetic pathway for UDP-N-acetylglucosamine (UDP-GlcNAc). The C-terminal domain catalyzes the transfer of acetyl group from acetyl coenzyme A to glucosamine-1-phosphate (GlcN-1-P) to produce N-acetylglucosamine-1-phosphate (GlcNAc-1-P), which is converted into UDP-GlcNAc by the transfer of uridine 5-monophosphate (from uridine 5-triphosphate), a reaction catalyzed by the N-terminal domain. This is Bifunctional protein GlmU from Pseudomonas aeruginosa (strain LESB58).